The primary structure comprises 285 residues: Probable endonuclease 4 (285 aa).

Zn(2+)-binding residues include H69, H109, E145, D179, H182, H216, D229, H231, and E261.

It belongs to the AP endonuclease 2 family. It depends on Zn(2+) as a cofactor.

The catalysed reaction is Endonucleolytic cleavage to 5'-phosphooligonucleotide end-products.. Endonuclease IV plays a role in DNA repair. It cleaves phosphodiester bonds at apurinic or apyrimidinic (AP) sites, generating a 3'-hydroxyl group and a 5'-terminal sugar phosphate. This Enterobacter sp. (strain 638) protein is Probable endonuclease 4.